Consider the following 433-residue polypeptide: Nuclear hormone receptor family member nhr-98 (433 aa).

The segment at residues 41–116 is a DNA-binding region (nuclear receptor); it reads SKKCQICENP…FGMTIDNFQF (76 aa). 2 NR C4-type zinc fingers span residues 44-64 and 80-104; these read CQIC…CRAC and CKTE…MQRC. The NR LBD domain maps to 177–433; the sequence is ETPYQVSNVL…CSHPGIFLNA (257 aa).

It belongs to the nuclear hormone receptor family.

Its subcellular location is the nucleus. Functionally, orphan nuclear receptor. This chain is Nuclear hormone receptor family member nhr-98 (nhr-98), found in Caenorhabditis elegans.